The primary structure comprises 171 residues: Regulator of ribonuclease activity A (171 aa).

The protein belongs to the RraA family. As to quaternary structure, homotrimer. Binds to both RNA-binding sites in the C-terminal region of Rne and to RhlB.

The protein localises to the cytoplasm. Globally modulates RNA abundance by binding to RNase E (Rne) and regulating its endonucleolytic activity. Can modulate Rne action in a substrate-dependent manner by altering the composition of the degradosome. Modulates RNA-binding and helicase activities of the degradosome. This is Regulator of ribonuclease activity A from Vibrio cholerae serotype O1 (strain ATCC 39315 / El Tor Inaba N16961).